Consider the following 898-residue polypeptide: Histone-lysine N-methyltransferase mes-4 (898 aa).

Residues 1-68 (MLPSSGDSSK…APILTNAPKD (68 aa)) form a disordered region. A compositionally biased stretch (polar residues) spans 36-51 (QRNATPQGAGSETSSN). 2 PHD-type zinc fingers span residues 126 to 214 (DSKC…CNLD) and 303 to 355 (IKAC…CVCG). In terms of domain architecture, SET spans 537–665 (EKIKLAATLC…DGDEITFSYN (129 aa)). A Post-SET domain is found at 671-687 (NLPDCECGAENCMGTMG). The interval 689–847 (AKREKPEVAD…SLQTIQETGK (159 aa)) is disordered. Basic and acidic residues predominate over residues 692–704 (EKPEVADSSEKAA). The span at 705-719 (KKNKSSKKKSVKNQN) shows a compositional bias: basic residues. Low complexity-rich tracts occupy residues 737 to 751 (ISPSKPSTSSASSTS) and 761 to 773 (SQNKKNLKKNSNQ). Residues 774 to 788 (PVADTGSTLSTSTEL) show a composition bias toward polar residues. Residues 802-811 (SSRSRAASSS) show a composition bias toward low complexity.

This sequence belongs to the class V-like SAM-binding methyltransferase superfamily. Histone-lysine methyltransferase family. SET2 subfamily. In adults, it is predominantly expressed in the germline, and weakly expressed in intestinal cells.

Its subcellular location is the nucleus. It localises to the chromosome. The catalysed reaction is L-lysyl(36)-[histone H3] + 2 S-adenosyl-L-methionine = N(6),N(6)-dimethyl-L-lysyl(36)-[histone H3] + 2 S-adenosyl-L-homocysteine + 2 H(+). In terms of biological role, histone methyltransferase. Dimethylates 'Lys-36' of histone H3, a specific tag for epigenetic transcriptional activation. Plays a central role in early development and is responsible for all H3 'Lys-36' dimethylation until about the 40-cell stage. Indirectly involved in the global inactivation of the X chromosomes in germline cells, possibly by excluding the mes-2-mes-3-mes-6 repressive Polycomb complex from the autosomes. Not related to transcription elongation. Required for small-RNA-induced H3K27 trimethylation. May suppress sensitivity to RNAi. May regulate the expression of genes required for vulval development. The sequence is that of Histone-lysine N-methyltransferase mes-4 from Caenorhabditis elegans.